Consider the following 219-residue polypeptide: Small ribosomal subunit protein uS3c (219 aa).

One can recognise a KH type-2 domain in the interval 43–118 (IKNYVQKNMK…KLNIAITRIA (76 aa)).

This sequence belongs to the universal ribosomal protein uS3 family. In terms of assembly, part of the 30S ribosomal subunit.

It is found in the plastid. The protein resides in the chloroplast. The protein is Small ribosomal subunit protein uS3c (rps3) of Panax ginseng (Korean ginseng).